An 884-amino-acid chain; its full sequence is Probable leucine-rich repeat receptor-like protein kinase At2g28990 (884 aa).

The first 19 residues, 1-19 (MKIHLLLAMIGTFVVIIGA), serve as a signal peptide directing secretion. At 20-508 (QDQEGFISLD…TEKKNKFLLP (489 aa)) the chain is on the extracellular side. Asn-70, Asn-177, Asn-217, Asn-231, Asn-251, Asn-284, Asn-298, Asn-334, Asn-418, Asn-427, Asn-438, Asn-459, and Asn-464 each carry an N-linked (GlcNAc...) asparagine glycan. LRR repeat units follow at residues 404–427 (SPTIISLDLSKSGLNGSIPQILQN), 428–451 (FTQLQELDLSNNSLTGPVPIFLAN), and 452–476 (MKTLSLINLSGNNLSGSVPQALLDK). The chain crosses the membrane as a helical span at residues 509–529 (VIASAASLVIVVVVVALFFVF). The Cytoplasmic segment spans residues 530 to 884 (RKKKASPSNL…IYNEVIPQAR (355 aa)). The segment at 535-559 (SPSNLHAPPSMPVSNPGHNSQSESS) is disordered. Residues 546-559 (PVSNPGHNSQSESS) are compositionally biased toward polar residues. At Thr-568 the chain carries Phosphothreonine. The region spanning 577 to 850 (NNFDKALGEG…RVVNELKECL (274 aa)) is the Protein kinase domain. ATP contacts are provided by residues 583–591 (LGEGGFGVV) and Lys-605. Tyr-650 bears the Phosphotyrosine mark. Asp-702 serves as the catalytic Proton acceptor. Residue Ser-736 is modified to Phosphoserine. 2 positions are modified to phosphothreonine: Thr-737 and Thr-742. Tyr-750 is subject to Phosphotyrosine.

The protein belongs to the protein kinase superfamily. Ser/Thr protein kinase family. As to quaternary structure, binds to the ammonium transporter AMT1-1.

The protein resides in the membrane. It catalyses the reaction L-seryl-[protein] + ATP = O-phospho-L-seryl-[protein] + ADP + H(+). The enzyme catalyses L-threonyl-[protein] + ATP = O-phospho-L-threonyl-[protein] + ADP + H(+). This chain is Probable leucine-rich repeat receptor-like protein kinase At2g28990, found in Arabidopsis thaliana (Mouse-ear cress).